The following is a 66-amino-acid chain: Large ribosomal subunit protein bL35 (66 aa).

Positions 1–23 (MPKMKTHRASAKRFKRTANGGLK) are disordered.

The protein belongs to the bacterial ribosomal protein bL35 family.

The chain is Large ribosomal subunit protein bL35 from Lactobacillus helveticus (strain DPC 4571).